A 447-amino-acid polypeptide reads, in one-letter code: Tubulin beta chain (447 aa).

Positions 11, 69, 138, 142, 143, 144, 204, and 226 each coordinate GTP. E69 is a binding site for Mg(2+). The segment at 424–447 is disordered; the sequence is QYQEASVSDAEEEYDEEAPLEGEE. Residues 432–447 are compositionally biased toward acidic residues; it reads DAEEEYDEEAPLEGEE.

The protein belongs to the tubulin family. Dimer of alpha and beta chains. A typical microtubule is a hollow water-filled tube with an outer diameter of 25 nm and an inner diameter of 15 nM. Alpha-beta heterodimers associate head-to-tail to form protofilaments running lengthwise along the microtubule wall with the beta-tubulin subunit facing the microtubule plus end conferring a structural polarity. Microtubules usually have 13 protofilaments but different protofilament numbers can be found in some organisms and specialized cells. Mg(2+) serves as cofactor.

It is found in the cytoplasm. The protein resides in the cytoskeleton. In terms of biological role, tubulin is the major constituent of microtubules, a cylinder consisting of laterally associated linear protofilaments composed of alpha- and beta-tubulin heterodimers. Microtubules grow by the addition of GTP-tubulin dimers to the microtubule end, where a stabilizing cap forms. Below the cap, tubulin dimers are in GDP-bound state, owing to GTPase activity of alpha-tubulin. The chain is Tubulin beta chain (TUB1) from Zymoseptoria tritici (Speckled leaf blotch fungus).